The primary structure comprises 414 residues: Serine/arginine-rich splicing factor SR45 (414 aa).

Disordered regions lie at residues 1 to 95 (MAKP…KAVQ) and 175 to 414 (LPPR…PRKT). Low complexity-rich tracts occupy residues 10–34 (SPSV…SRSI) and 42–60 (RSLS…GSRS). Positions 62–69 (PRRGKSPA) match the Nuclear localization signal 1 motif. The residue at position 77 (Ser77) is a Phosphoserine. In terms of domain architecture, RRM spans 98 to 176 (LVLHVDSLSR…KVVKATFTLP (79 aa)). A compositionally biased stretch (low complexity) spans 176-191 (PPRQKVSSPPKPVSAA). Basic and acidic residues predominate over residues 205-220 (DAEKDGGPRRPRETSP). A required for isoform 1 function in petal development region spans residues 218-219 (TS). The span at 228–243 (PRRRSPLPRRGLSPRR) shows a compositional bias: basic residues. A Nuclear localization signal 2 motif is present at residues 229–236 (RRRSPLPR). Ser256 is modified (phosphoserine). 3 consecutive short sequence motifs (nuclear localization signal) follow at residues 284 to 291 (PRRYRSPP), 318 to 325 (PRRLRSPP), and 338 to 345 (IRRPGRSR). Basic residues-rich tracts occupy residues 285–343 (RRYR…RPGR) and 352–363 (RKGRGPAGRRGR). Positions 364-373 (SSSYSSSPSP) are enriched in low complexity. Positions 373–380 (PRRIPRKI) match the Nuclear localization signal 6 motif. The span at 375-394 (RIPRKISRSRSPKRPLRGKR) shows a compositional bias: basic residues. Positions 404 to 414 (SPPPPPPPRKT) are enriched in pro residues.

Belongs to the splicing factor SR family. SR45 subfamily. Component of the spliceosome. Interacts with AFC2, U2AF35A, U2AF35B, RNU1, SCL33 and SKIP. The interaction with AFC2 depends on phosphorylation status. Interaction with RNU1 defines initial 5' splice sites and interaction with U2AF35B 3' splice sites in the early stage of spliceosome assembly. Post-translationally, phosphorylated by AFC2. The phosphorylation status regulates intranuclear distribution. As to expression, especially present in actively growing regions and dividing cells. Mostly expressed in roots (primary and secondary root meristem), shoot apical meristem (SAM), leaf primordia, pollen and inflorescence, and, to a lower extent, in leaves, vascular tissue, hydathode and fruits.

The protein resides in the nucleus speckle. The protein localises to the nucleus. Its subcellular location is the nucleoplasm. In terms of biological role, involved in 5' and 3' splicing site selection of introns, and may bridge the 5' and 3' components of the spliceosome. Isoform 1 is required during flower petal development and isoform 2 is involved in root growth. Negatively regulates glucose and abscisic acid (ABA) signaling during early seedling development. Involved in the RNA-directed DNA methylation pathway. Modulates KIN10 stability in response to sugars, probably through the splicing regulation of 5PTASE13, a protein implicated in the proteasomal degradation of KIN10. This Arabidopsis thaliana (Mouse-ear cress) protein is Serine/arginine-rich splicing factor SR45.